The following is a 533-amino-acid chain: DNA-directed RNA polymerase III subunit RPC3 (533 aa).

Positions 161–183 (PLVPDTDSSDPGPPPPAPNLVIN) are disordered. Ser-194 bears the Phosphoserine mark. Positions 197–228 (GKGKRRRSSDEDAAGEPKAKKPRCTDNEEPTP) are disordered. Residues 211-222 (GEPKAKKPRCTD) are compositionally biased toward basic and acidic residues.

The protein belongs to the eukaryotic RPC3/POLR3C RNA polymerase subunit family. Component of the RNA polymerase III complex consisting of 17 subunits: a ten-subunit horseshoe-shaped catalytic core composed of POLR3A/RPC1, POLR3B/RPC2, POLR1C/RPAC1, POLR1D/RPAC2, POLR3K/RPC10, POLR2E/RPABC1, POLR2F/RPABC2, POLR2H/RPABC3, POLR2K/RPABC4 and POLR2L/RPABC5; a mobile stalk composed of two subunits POLR3H/RPC8 and CRCP/RPC9, protruding from the core and functioning primarily in transcription initiation; and additional subunits homologous to general transcription factors of the RNA polymerase II machinery, POLR3C/RPC3-POLR3F/RPC6-POLR3G/RPC7 heterotrimer required for transcription initiation and POLR3D/RPC4-POLR3E/RPC5 heterodimer involved in both transcription initiation and termination. Directly interacts with POLR3G/RPC7 and POLR3GL. Directly interacts with POLR3F/RPC6. Interacts with GTF3C4. As part of the RNA polymerase III complex, interacts with PKP2.

It is found in the nucleus. DNA-dependent RNA polymerase catalyzes the transcription of DNA into RNA using the four ribonucleoside triphosphates as substrates. Specific peripheric component of RNA polymerase III (Pol III) which synthesizes small non-coding RNAs including 5S rRNA, snRNAs, tRNAs and miRNAs from at least 500 distinct genomic loci. Part of POLR3C/RPC3-POLR3F/RPC6-POLR3G/RPC7 heterotrimer, coordinates the dynamics of Pol III stalk and clamp modules during the transition from apo to elongation state. Pol III plays a key role in sensing and limiting infection by intracellular bacteria and DNA viruses. Acts as a nuclear and cytosolic DNA sensor involved in innate immune response. Can sense non-self dsDNA that serves as template for transcription into dsRNA. The non-self RNA polymerase III transcripts, such as Epstein-Barr virus-encoded RNAs (EBERs) induce type I interferon and NF-kappa-B through the RIG-I pathway. Preferentially binds single-stranded DNA (ssDNA) in a sequence-independent manner. The chain is DNA-directed RNA polymerase III subunit RPC3 from Rattus norvegicus (Rat).